A 312-amino-acid chain; its full sequence is Isoflavone reductase homolog (312 aa).

Residues 10-16, Arg-35, and Lys-44 each bind NADP(+); that span reads GGTGYVG. The Proton acceptor role is filled by Lys-138. NADP(+) is bound at residue Arg-142. His-270 lines the substrate pocket.

Belongs to the NmrA-type oxidoreductase family. Isoflavone reductase subfamily.

This is Isoflavone reductase homolog from Lupinus albus (White lupine).